The chain runs to 371 residues: Cytochrome b (371 aa).

The next 4 membrane-spanning stretches (helical) occupy residues 25-45 (FGSMLLTCLALQTMTGFFLAI), 69-90 (WTMQSLHAIGASLFFICIYIHI), 105-125 (WLSGITLLFTLMATAFFGYVL), and 170-190 (FFALHFILPFIIISLSSAHIM). The heme b site is built by His75 and His89. The heme b site is built by His174 and His188. A ubiquinone is bound at residue His193. 4 consecutive transmembrane segments (helical) span residues 218-238 (NKDMLTATIMITMLFITLSFL), 280-300 (LGGTLALLTSVMILATTPFTH), 312-332 (MTQTLFWILIATLITITWTAT), and 339-358 (FMFISQMASMIYFSFFFMNP).

It belongs to the cytochrome b family. In terms of assembly, the cytochrome bc1 complex contains 3 respiratory subunits (MT-CYB, CYC1 and UQCRFS1), 2 core proteins (UQCRC1 and UQCRC2) and probably 6 low-molecular weight proteins. It depends on heme b as a cofactor.

It localises to the mitochondrion inner membrane. Component of the ubiquinol-cytochrome c reductase complex (complex III or cytochrome b-c1 complex) that is part of the mitochondrial respiratory chain. The b-c1 complex mediates electron transfer from ubiquinol to cytochrome c. Contributes to the generation of a proton gradient across the mitochondrial membrane that is then used for ATP synthesis. This is Cytochrome b (MT-CYB) from Elapsoidea nigra (Usambara garter snake).